Here is a 120-residue protein sequence, read N- to C-terminus: uncharacterized protein (120 aa).

The signal sequence occupies residues 1–16 (MFKFILLCFCINFAFS).

This is an uncharacterized protein from Acheta domesticus (House cricket).